Here is a 62-residue protein sequence, read N- to C-terminus: Mu-elapitoxin-Na1a (62 aa).

4 disulfides stabilise this stretch: Cys3-Cys22, Cys15-Cys40, Cys44-Cys55, and Cys56-Cys61.

This sequence belongs to the three-finger toxin family. Short-chain subfamily. Orphan group XV sub-subfamily. As to expression, expressed by the venom gland.

It is found in the secreted. Functionally, potent inhibitor of human Nav1.8/SCN10A (IC(50)=141-380 nM). Is highly selective for this channel and acts in a reversible manner. Shows a depolarizing shift of activation and hyperpolarizing shift of inactivation. In contrast to the very similar cytotoxin A5 (AC P62375), does not seem to bind integrin alpha-V/beta-3, since it does not promote or inhibit the proliferation of HUVECs and C-PAE cells. In vivo, in rodent models of inflammatory and neuropathic pain, it alleviates nociceptive behaviors more potently than does morphine. It displays no evident cytotoxic, hemolytic and cardiotoxic activities and produces no obvious adverse responses in mice even at a dose 30-fold higher than that producing a significant analgesic effect. This chain is Mu-elapitoxin-Na1a, found in Naja atra (Chinese cobra).